A 444-amino-acid chain; its full sequence is Protein CLP1 homolog (444 aa).

Residues Glu33, Lys72, and 140–145 (DSGKST) contribute to the ATP site.

Belongs to the Clp1 family. Clp1 subfamily. In terms of assembly, interacts with PCFS4 and SYM5. Forms a complex with cleavage and polyadenylation specificity factor (CPSF) subunits CPSF30, CPSF100, PCFS1, PCFS4, PCFS5, CPSF160 and FY.

The protein localises to the nucleus. Required for endonucleolytic cleavage during polyadenylation-dependent pre-mRNA 3'-end formation. Functions in gametophyte, embryo and postembryotic development. The chain is Protein CLP1 homolog (CLPS3) from Arabidopsis thaliana (Mouse-ear cress).